Here is a 421-residue protein sequence, read N- to C-terminus: Enolase (421 aa).

Gln162 is a binding site for (2R)-2-phosphoglycerate. Glu204 (proton donor) is an active-site residue. The Mg(2+) site is built by Asp241, Glu284, and Asp311. (2R)-2-phosphoglycerate is bound by residues Lys336, Arg365, Ser366, and Lys387. Lys336 (proton acceptor) is an active-site residue.

Belongs to the enolase family. The cofactor is Mg(2+).

It localises to the cytoplasm. Its subcellular location is the secreted. It is found in the cell surface. The enzyme catalyses (2R)-2-phosphoglycerate = phosphoenolpyruvate + H2O. It participates in carbohydrate degradation; glycolysis; pyruvate from D-glyceraldehyde 3-phosphate: step 4/5. Catalyzes the reversible conversion of 2-phosphoglycerate (2-PG) into phosphoenolpyruvate (PEP). It is essential for the degradation of carbohydrates via glycolysis. The sequence is that of Enolase from Nautilia profundicola (strain ATCC BAA-1463 / DSM 18972 / AmH).